A 39-amino-acid chain; its full sequence is Photosystem II reaction center protein X (39 aa).

The helical transmembrane segment at 10-30 (WSLVLGAAIVLIPATIGLIFI) threads the bilayer.

The protein belongs to the PsbX family. Type 1 subfamily. PSII is composed of 1 copy each of membrane proteins PsbA, PsbB, PsbC, PsbD, PsbE, PsbF, PsbH, PsbI, PsbJ, PsbK, PsbL, PsbM, PsbT, PsbX, PsbY, PsbZ, Psb30/Ycf12, peripheral proteins PsbO, CyanoQ (PsbQ), PsbU, PsbV and a large number of cofactors. It forms dimeric complexes.

The protein resides in the cellular thylakoid membrane. In terms of biological role, involved in the binding and/or turnover of quinones at the Q(B) site of photosystem II (PSII). PSII is a light-driven water plastoquinone oxidoreductase, using light energy to abstract electrons from H(2)O, generating a proton gradient subsequently used for ATP formation. This chain is Photosystem II reaction center protein X, found in Microcystis aeruginosa (strain NIES-843 / IAM M-2473).